Here is a 258-residue protein sequence, read N- to C-terminus: Dihydroorotate dehydrogenase B (NAD(+)), electron transfer subunit (258 aa).

The FAD-binding FR-type domain occupies 1–101 (MKKAYLTVVS…LGPLGNGYDP (101 aa)). Residues 52–55 (RPIS), 69–71 (IYR), and 76–77 (GT) contribute to the FAD site. Positions 220, 225, 228, and 243 each coordinate [2Fe-2S] cluster.

It belongs to the PyrK family. Heterotetramer of 2 PyrK and 2 PyrD type B subunits. [2Fe-2S] cluster is required as a cofactor. The cofactor is FAD.

Its pathway is pyrimidine metabolism; UMP biosynthesis via de novo pathway; orotate from (S)-dihydroorotate (NAD(+) route): step 1/1. Its function is as follows. Responsible for channeling the electrons from the oxidation of dihydroorotate from the FMN redox center in the PyrD type B subunit to the ultimate electron acceptor NAD(+). This is Dihydroorotate dehydrogenase B (NAD(+)), electron transfer subunit from Bacillus pumilus (strain SAFR-032).